A 255-amino-acid polypeptide reads, in one-letter code: Acetylglutamate kinase (255 aa).

Substrate is bound by residues 40-41 (GG), Arg62, and Asn153.

Belongs to the acetylglutamate kinase family. ArgB subfamily.

The protein localises to the cytoplasm. It carries out the reaction N-acetyl-L-glutamate + ATP = N-acetyl-L-glutamyl 5-phosphate + ADP. It participates in amino-acid biosynthesis; L-arginine biosynthesis; N(2)-acetyl-L-ornithine from L-glutamate: step 2/4. Its function is as follows. Catalyzes the ATP-dependent phosphorylation of N-acetyl-L-glutamate. This Bacillus cereus (strain ATCC 14579 / DSM 31 / CCUG 7414 / JCM 2152 / NBRC 15305 / NCIMB 9373 / NCTC 2599 / NRRL B-3711) protein is Acetylglutamate kinase.